The following is a 340-amino-acid chain: DnaJ homolog subfamily B member 1 (340 aa).

Positions 2–70 (GKDYYQTLGL…REIFDRYGEE (69 aa)) constitute a J domain. Threonine 307 is subject to Phosphothreonine.

Interacts with DNAJC3. Interacts with HSF1 (via transactivation domain); this interaction results in the inhibition of heat shock- and HSF1-induced transcriptional activity during the attenuation and recovery phase period of the heat shock response. Interacts with BAG3.

It localises to the cytoplasm. It is found in the nucleus. The protein localises to the nucleolus. Functionally, interacts with HSP70 and can stimulate its ATPase activity. Stimulates the association between HSC70 and HIP. Negatively regulates heat shock-induced HSF1 transcriptional activity during the attenuation and recovery phase period of the heat shock response. Stimulates ATP hydrolysis and the folding of unfolded proteins mediated by HSPA1A/B (in vitro). This Homo sapiens (Human) protein is DnaJ homolog subfamily B member 1 (DNAJB1).